The chain runs to 466 residues: Ribosomal protein uS12 methylthiotransferase RimO (466 aa).

The MTTase N-terminal domain occupies 15-125 (PKVGFVSLGC…VMEAVHAALP (111 aa)). Residues Cys24, Cys60, Cys89, Cys156, Cys160, and Cys163 each contribute to the [4Fe-4S] cluster site. The 239-residue stretch at 142-380 (LTPRHYAYLK…AKQAEISALR (239 aa)) folds into the Radical SAM core domain. In terms of domain architecture, TRAM spans 382–450 (EAKIGSVQQC…EHDLFGDALP (69 aa)).

It belongs to the methylthiotransferase family. RimO subfamily. [4Fe-4S] cluster is required as a cofactor.

It is found in the cytoplasm. It catalyses the reaction L-aspartate(89)-[ribosomal protein uS12]-hydrogen + (sulfur carrier)-SH + AH2 + 2 S-adenosyl-L-methionine = 3-methylsulfanyl-L-aspartate(89)-[ribosomal protein uS12]-hydrogen + (sulfur carrier)-H + 5'-deoxyadenosine + L-methionine + A + S-adenosyl-L-homocysteine + 2 H(+). In terms of biological role, catalyzes the methylthiolation of an aspartic acid residue of ribosomal protein uS12. This is Ribosomal protein uS12 methylthiotransferase RimO from Xanthomonas oryzae pv. oryzae (strain MAFF 311018).